The following is a 507-amino-acid chain: Glycogen synthase (507 aa).

Lys15 is an ADP-alpha-D-glucose binding site.

The protein belongs to the glycosyltransferase 1 family. Bacterial/plant glycogen synthase subfamily.

The catalysed reaction is [(1-&gt;4)-alpha-D-glucosyl](n) + ADP-alpha-D-glucose = [(1-&gt;4)-alpha-D-glucosyl](n+1) + ADP + H(+). It participates in glycan biosynthesis; glycogen biosynthesis. In terms of biological role, synthesizes alpha-1,4-glucan chains using ADP-glucose. The protein is Glycogen synthase of Rhodopirellula baltica (strain DSM 10527 / NCIMB 13988 / SH1).